The following is a 747-amino-acid chain: Nucleolar complex-associated protein 3 (747 aa).

Basic residues predominate over residues Met-1 to Lys-11. The tract at residues Met-1 to Pro-142 is disordered. The segment covering Glu-74 to Asn-86 has biased composition (polar residues). A compositionally biased stretch (basic and acidic residues) spans Asp-89–Gln-109. Ser-120 is modified (phosphoserine). Residues Lys-214 to Glu-234 adopt a coiled-coil conformation.

It belongs to the CBF/MAK21 family.

It is found in the nucleus. The protein resides in the nucleolus. In terms of biological role, may be required for synthesis of 60S ribosomal subunits and the transport of pre-ribosomes from the nucleoplasm to the cytoplasm. This Schizosaccharomyces pombe (strain 972 / ATCC 24843) (Fission yeast) protein is Nucleolar complex-associated protein 3 (noc3).